We begin with the raw amino-acid sequence, 215 residues long: Uracil phosphoribosyltransferase (215 aa).

Residues R84, R109, and 136-144 each bind 5-phospho-alpha-D-ribose 1-diphosphate; that span reads DPMLATGNT. Residues I198 and 203-205 contribute to the uracil site; that span reads GDA. D204 contacts 5-phospho-alpha-D-ribose 1-diphosphate.

Belongs to the UPRTase family. The cofactor is Mg(2+).

It carries out the reaction UMP + diphosphate = 5-phospho-alpha-D-ribose 1-diphosphate + uracil. Its pathway is pyrimidine metabolism; UMP biosynthesis via salvage pathway; UMP from uracil: step 1/1. With respect to regulation, allosterically activated by GTP. Catalyzes the conversion of uracil and 5-phospho-alpha-D-ribose 1-diphosphate (PRPP) to UMP and diphosphate. The polypeptide is Uracil phosphoribosyltransferase (Methanothermobacter thermautotrophicus (strain ATCC 29096 / DSM 1053 / JCM 10044 / NBRC 100330 / Delta H) (Methanobacterium thermoautotrophicum)).